Consider the following 861-residue polypeptide: Integrator complex subunit 6-like (861 aa).

A VWFA domain is found at 3–227; the sequence is ILLFLIDTSA…QCLESLVQKV (225 aa). The tract at residues 605-626 is disordered; the sequence is PQNKVKRPGEPNSPMSSKRRRS. Ser617 is modified (phosphoserine).

This Homo sapiens (Human) protein is Integrator complex subunit 6-like (INTS6L).